A 200-amino-acid chain; its full sequence is 2,3-bisphosphoglycerate-dependent phosphoglycerate mutase (200 aa).

The Tele-phosphohistidine intermediate role is filled by H9. H142 is a catalytic residue.

It belongs to the phosphoglycerate mutase family. In terms of assembly, homodimer.

It catalyses the reaction (2R)-2-phosphoglycerate = (2R)-3-phosphoglycerate. The protein operates within carbohydrate degradation; glycolysis; pyruvate from D-glyceraldehyde 3-phosphate: step 3/5. Its function is as follows. Catalyzes the interconversion of 2-phosphoglycerate and 3-phosphoglycerate. The chain is 2,3-bisphosphoglycerate-dependent phosphoglycerate mutase from Thermoplasma acidophilum (strain ATCC 25905 / DSM 1728 / JCM 9062 / NBRC 15155 / AMRC-C165).